We begin with the raw amino-acid sequence, 220 residues long: RNA-free ribonuclease P (220 aa).

It belongs to the HARP family.

It carries out the reaction Endonucleolytic cleavage of RNA, removing 5'-extranucleotides from tRNA precursor.. In terms of biological role, RNA-free RNase P that catalyzes the removal of the 5'-leader sequence from pre-tRNA to produce the mature 5'-terminus. This is RNA-free ribonuclease P from Methanothermobacter thermautotrophicus (strain ATCC 29096 / DSM 1053 / JCM 10044 / NBRC 100330 / Delta H) (Methanobacterium thermoautotrophicum).